Reading from the N-terminus, the 677-residue chain is DNA ligase (677 aa).

NAD(+)-binding positions include aspartate 32–aspartate 36, serine 81–leucine 82, and glutamate 112. Lysine 114 functions as the N6-AMP-lysine intermediate in the catalytic mechanism. Arginine 135, glutamate 171, lysine 288, and lysine 312 together coordinate NAD(+). Positions 416, 419, 434, and 439 each coordinate Zn(2+). One can recognise a BRCT domain in the interval asparagine 598–serine 677.

This sequence belongs to the NAD-dependent DNA ligase family. LigA subfamily. The cofactor is Mg(2+). Mn(2+) is required as a cofactor.

The enzyme catalyses NAD(+) + (deoxyribonucleotide)n-3'-hydroxyl + 5'-phospho-(deoxyribonucleotide)m = (deoxyribonucleotide)n+m + AMP + beta-nicotinamide D-nucleotide.. In terms of biological role, DNA ligase that catalyzes the formation of phosphodiester linkages between 5'-phosphoryl and 3'-hydroxyl groups in double-stranded DNA using NAD as a coenzyme and as the energy source for the reaction. It is essential for DNA replication and repair of damaged DNA. The sequence is that of DNA ligase from Dehalococcoides mccartyi (strain CBDB1).